Consider the following 311-residue polypeptide: tRNA dimethylallyltransferase (311 aa).

Residue 11 to 18 participates in ATP binding; that stretch reads GPTAVGKT. A substrate-binding site is contributed by 13–18; the sequence is TAVGKT. Positions 36-39 are interaction with substrate tRNA; the sequence is DSMQ.

It belongs to the IPP transferase family. Monomer. The cofactor is Mg(2+).

It carries out the reaction adenosine(37) in tRNA + dimethylallyl diphosphate = N(6)-dimethylallyladenosine(37) in tRNA + diphosphate. In terms of biological role, catalyzes the transfer of a dimethylallyl group onto the adenine at position 37 in tRNAs that read codons beginning with uridine, leading to the formation of N6-(dimethylallyl)adenosine (i(6)A). In Clostridioides difficile (strain 630) (Peptoclostridium difficile), this protein is tRNA dimethylallyltransferase.